Here is a 329-residue protein sequence, read N- to C-terminus: Tetraacyldisaccharide 4'-kinase (329 aa).

58 to 65 (SVGGTGKT) lines the ATP pocket.

This sequence belongs to the LpxK family.

It carries out the reaction a lipid A disaccharide + ATP = a lipid IVA + ADP + H(+). It functions in the pathway glycolipid biosynthesis; lipid IV(A) biosynthesis; lipid IV(A) from (3R)-3-hydroxytetradecanoyl-[acyl-carrier-protein] and UDP-N-acetyl-alpha-D-glucosamine: step 6/6. In terms of biological role, transfers the gamma-phosphate of ATP to the 4'-position of a tetraacyldisaccharide 1-phosphate intermediate (termed DS-1-P) to form tetraacyldisaccharide 1,4'-bis-phosphate (lipid IVA). This chain is Tetraacyldisaccharide 4'-kinase, found in Idiomarina loihiensis (strain ATCC BAA-735 / DSM 15497 / L2-TR).